Here is a 256-residue protein sequence, read N- to C-terminus: UPF0246 protein Sde_3824 (256 aa).

This sequence belongs to the UPF0246 family.

The protein is UPF0246 protein Sde_3824 of Saccharophagus degradans (strain 2-40 / ATCC 43961 / DSM 17024).